The sequence spans 452 residues: MRYLPLTPDDRAAMLGAIGASSIDELFADVPAGARLDGPIAGLPMHASELAVERHMGALARRNRAAGDGPFFLGAGAYRHHVPASVDHLIQRGEFLTAYTPYQPEIAQGTLQMLFEFQSQVARLFGTDVANASMYDGSTACWEAIVMARRITRRSKALLSTGLHPHYRSVARTMAKYTRDVLVDGDPRLEPGTDWAALAGRIDTETSCVVVQYPDILGRIDDMTTLAEACQTAGALLIAVVTEPVALGLIKSPGEMGADIVVGEGQSLGVGLQFGGPYVGLFACKSKYVRQMPGRLCGETVDANGKRGFVLTLSTREQHIRREKATSNICTNSGLCALAFSIHMTLLGEAGLRQLATINHGRAKAAATELAKVPAVSVMNDSFFNEFTLLLPTAARPVVHRLAEQDILGGVSLGRLYPDTAALENGLVVAVTETVTEADIAAFAAALKEVLA.

This sequence belongs to the GcvP family. N-terminal subunit subfamily. In terms of assembly, the glycine cleavage system is composed of four proteins: P, T, L and H. In this organism, the P 'protein' is a heterodimer of two subunits.

It catalyses the reaction N(6)-[(R)-lipoyl]-L-lysyl-[glycine-cleavage complex H protein] + glycine + H(+) = N(6)-[(R)-S(8)-aminomethyldihydrolipoyl]-L-lysyl-[glycine-cleavage complex H protein] + CO2. The glycine cleavage system catalyzes the degradation of glycine. The P protein binds the alpha-amino group of glycine through its pyridoxal phosphate cofactor; CO(2) is released and the remaining methylamine moiety is then transferred to the lipoamide cofactor of the H protein. The protein is Probable glycine dehydrogenase (decarboxylating) subunit 1 of Sphingopyxis alaskensis (strain DSM 13593 / LMG 18877 / RB2256) (Sphingomonas alaskensis).